A 192-amino-acid chain; its full sequence is uncharacterized protein (192 aa).

The Nudix hydrolase domain maps to 29 to 160; the sequence is QRQAAVLVPI…PLDIHRRGND (132 aa). Positions 67–89 match the Nudix box motif; that stretch reads GAVDNTDATLIAAALREAQEEVA. Positions 83 and 87 each coordinate Mg(2+).

It belongs to the Nudix hydrolase family. PCD1 subfamily. It depends on Mn(2+) as a cofactor. Mg(2+) is required as a cofactor.

Its function is as follows. Probably mediates the hydrolysis of some nucleoside diphosphate derivatives. This is an uncharacterized protein from Klebsiella pneumoniae subsp. pneumoniae (strain ATCC 700721 / MGH 78578).